A 613-amino-acid polypeptide reads, in one-letter code: Phosphoinositide phospholipase C 6 (613 aa).

Positions Q137–K281 constitute a PI-PLC X-box domain. Residues H152 and H198 contribute to the active site. The disordered stretch occupies residues E288–K349. Residues K349–M465 enclose the PI-PLC Y-box domain. The C2 domain maps to K466–D595.

Ca(2+) serves as cofactor. In terms of tissue distribution, expressed in leaves, flowers and siliques, but not in roots.

The protein localises to the cell membrane. The enzyme catalyses a 1,2-diacyl-sn-glycero-3-phospho-(1D-myo-inositol-4,5-bisphosphate) + H2O = 1D-myo-inositol 1,4,5-trisphosphate + a 1,2-diacyl-sn-glycerol + H(+). In terms of biological role, the production of the second messenger molecules diacylglycerol (DAG) and inositol 1,4,5-trisphosphate (IP3) is mediated by activated phosphatidylinositol-specific phospholipase C enzymes. This chain is Phosphoinositide phospholipase C 6 (PLC6), found in Arabidopsis thaliana (Mouse-ear cress).